Reading from the N-terminus, the 141-residue chain is Hemoglobin subunit alpha (141 aa).

Residues 1–141 (VLSANDKTNV…VSTVLTSKYR (141 aa)) enclose the Globin domain. Phosphoserine is present on Ser-3. Position 7 is an N6-succinyllysine (Lys-7). A Phosphothreonine modification is found at Thr-8. Lys-11 carries the N6-succinyllysine modification. An N6-acetyllysine; alternate modification is found at Lys-16. An N6-succinyllysine; alternate modification is found at Lys-16. Tyr-24 is modified (phosphotyrosine). Position 35 is a phosphoserine (Ser-35). N6-succinyllysine is present on Lys-40. Phosphoserine is present on Ser-49. O2 is bound at residue Gln-58. His-87 is a binding site for heme b. A Phosphothreonine modification is found at Thr-108. Residues Ser-124 and Ser-131 each carry the phosphoserine modification. Phosphothreonine is present on residues Thr-134 and Thr-137. Ser-138 carries the post-translational modification Phosphoserine.

This sequence belongs to the globin family. Heterotetramer of two alpha chains and two beta chains. In terms of tissue distribution, red blood cells.

Its function is as follows. Involved in oxygen transport from the lung to the various peripheral tissues. Functionally, hemopressin acts as an antagonist peptide of the cannabinoid receptor CNR1. Hemopressin-binding efficiently blocks cannabinoid receptor CNR1 and subsequent signaling. This Didelphis virginiana (North American opossum) protein is Hemoglobin subunit alpha (HBA).